The chain runs to 668 residues: DNA ligase (668 aa).

NAD(+)-binding positions include 32–36, 81–82, and Glu111; these read DVEYD and SL. Lys113 (N6-AMP-lysine intermediate) is an active-site residue. NAD(+) contacts are provided by Arg134, Glu171, Lys290, and Lys314. 4 residues coordinate Zn(2+): Cys408, Cys411, Cys426, and Cys432. The 78-residue stretch at 591 to 668 folds into the BRCT domain; that stretch reads EEDLSLKGQT…DEEALIAILS (78 aa).

The protein belongs to the NAD-dependent DNA ligase family. LigA subfamily. It depends on Mg(2+) as a cofactor. Requires Mn(2+) as cofactor.

It carries out the reaction NAD(+) + (deoxyribonucleotide)n-3'-hydroxyl + 5'-phospho-(deoxyribonucleotide)m = (deoxyribonucleotide)n+m + AMP + beta-nicotinamide D-nucleotide.. In terms of biological role, DNA ligase that catalyzes the formation of phosphodiester linkages between 5'-phosphoryl and 3'-hydroxyl groups in double-stranded DNA using NAD as a coenzyme and as the energy source for the reaction. It is essential for DNA replication and repair of damaged DNA. The sequence is that of DNA ligase from Shewanella piezotolerans (strain WP3 / JCM 13877).